We begin with the raw amino-acid sequence, 197 residues long: Holliday junction branch migration complex subunit RuvA (197 aa).

The tract at residues 1–64 (MIASIRGILI…EDSLTLYGFE (64 aa)) is domain I. Residues 65–145 (TVEQRQLFET…GLPTGAAVTP (81 aa)) are domain II. The segment at 146 to 148 (AVA) is flexible linker. The tract at residues 148–197 (AAANAELSEALISLGFTDAEAAAAIAALPSDAPPDLEERVRLALRYFSAS) is domain III.

This sequence belongs to the RuvA family. As to quaternary structure, homotetramer. Forms an RuvA(8)-RuvB(12)-Holliday junction (HJ) complex. HJ DNA is sandwiched between 2 RuvA tetramers; dsDNA enters through RuvA and exits via RuvB. An RuvB hexamer assembles on each DNA strand where it exits the tetramer. Each RuvB hexamer is contacted by two RuvA subunits (via domain III) on 2 adjacent RuvB subunits; this complex drives branch migration. In the full resolvosome a probable DNA-RuvA(4)-RuvB(12)-RuvC(2) complex forms which resolves the HJ.

It localises to the cytoplasm. In terms of biological role, the RuvA-RuvB-RuvC complex processes Holliday junction (HJ) DNA during genetic recombination and DNA repair, while the RuvA-RuvB complex plays an important role in the rescue of blocked DNA replication forks via replication fork reversal (RFR). RuvA specifically binds to HJ cruciform DNA, conferring on it an open structure. The RuvB hexamer acts as an ATP-dependent pump, pulling dsDNA into and through the RuvAB complex. HJ branch migration allows RuvC to scan DNA until it finds its consensus sequence, where it cleaves and resolves the cruciform DNA. This chain is Holliday junction branch migration complex subunit RuvA, found in Roseiflexus sp. (strain RS-1).